Reading from the N-terminus, the 250-residue chain is Probable transcriptional regulatory protein Paes_0496 (250 aa).

Belongs to the TACO1 family.

It is found in the cytoplasm. The polypeptide is Probable transcriptional regulatory protein Paes_0496 (Prosthecochloris aestuarii (strain DSM 271 / SK 413)).